The following is a 246-amino-acid chain: Large ribosomal subunit protein uL30-like 1 (246 aa).

S54 carries the phosphoserine modification.

The protein belongs to the universal ribosomal protein uL30 family.

This Pongo abelii (Sumatran orangutan) protein is Large ribosomal subunit protein uL30-like 1 (RPL7L1).